A 198-amino-acid chain; its full sequence is Recombination protein RecR (198 aa).

The segment at 57–72 (CSVCGNITDEDPCEIC) adopts a C4-type zinc-finger fold. The Toprim domain occupies 80 to 175 (EMILVVEQPK…KVTRLAHGLA (96 aa)).

This sequence belongs to the RecR family.

Its function is as follows. May play a role in DNA repair. It seems to be involved in an RecBC-independent recombinational process of DNA repair. It may act with RecF and RecO. The sequence is that of Recombination protein RecR from Latilactobacillus sakei subsp. sakei (strain 23K) (Lactobacillus sakei subsp. sakei).